Reading from the N-terminus, the 477-residue chain is Aspartyl/glutamyl-tRNA(Asn/Gln) amidotransferase subunit B (477 aa).

This sequence belongs to the GatB/GatE family. GatB subfamily. As to quaternary structure, heterotrimer of A, B and C subunits.

The enzyme catalyses L-glutamyl-tRNA(Gln) + L-glutamine + ATP + H2O = L-glutaminyl-tRNA(Gln) + L-glutamate + ADP + phosphate + H(+). It catalyses the reaction L-aspartyl-tRNA(Asn) + L-glutamine + ATP + H2O = L-asparaginyl-tRNA(Asn) + L-glutamate + ADP + phosphate + 2 H(+). Allows the formation of correctly charged Asn-tRNA(Asn) or Gln-tRNA(Gln) through the transamidation of misacylated Asp-tRNA(Asn) or Glu-tRNA(Gln) in organisms which lack either or both of asparaginyl-tRNA or glutaminyl-tRNA synthetases. The reaction takes place in the presence of glutamine and ATP through an activated phospho-Asp-tRNA(Asn) or phospho-Glu-tRNA(Gln). This Thioalkalivibrio sulfidiphilus (strain HL-EbGR7) protein is Aspartyl/glutamyl-tRNA(Asn/Gln) amidotransferase subunit B.